The sequence spans 261 residues: Cytochrome c oxidase subunit 3 (261 aa).

Topologically, residues 1–15 (MTHQTHAYHMVNPSP) are mitochondrial matrix. A helical transmembrane segment spans residues 16–34 (WPLTGALSALLMTSGLIMW). Residues 35–40 (FHFNST) lie on the Mitochondrial intermembrane side of the membrane. Residues 41 to 66 (TLLMLGLTTNMLTMYQWWRDVIREST) traverse the membrane as a helical segment. The Mitochondrial matrix segment spans residues 67-72 (FQGHHT). A helical transmembrane segment spans residues 73 to 105 (PNVQKGLRYGMILFIISEVLFFTGFFWAFYHSS). Topologically, residues 106–128 (LAPTPELGGCWPPTGIHPLNPLE) are mitochondrial intermembrane. The helical transmembrane segment at 129-152 (VPLLNTSVLLASGVSITWAHHSLM) threads the bilayer. The Mitochondrial matrix segment spans residues 153–155 (EGN). Residues 156–183 (RNHMLQALFITIALGVYFTLLQASEYYE) traverse the membrane as a helical segment. The Mitochondrial intermembrane portion of the chain corresponds to 184–190 (APFTISD). A helical membrane pass occupies residues 191–223 (GVYGSTFFVATGFHGLHVIIGSTFLIVCFFRQL). Residues 224-232 (KFHFTSSHH) are Mitochondrial matrix-facing. The chain crosses the membrane as a helical span at residues 233–256 (FGFEAAAWYWHFVDVVWLFLYVSI). Residues 257 to 261 (YWWGS) are Mitochondrial intermembrane-facing.

This sequence belongs to the cytochrome c oxidase subunit 3 family. Component of the cytochrome c oxidase (complex IV, CIV), a multisubunit enzyme composed of 14 subunits. The complex is composed of a catalytic core of 3 subunits MT-CO1, MT-CO2 and MT-CO3, encoded in the mitochondrial DNA, and 11 supernumerary subunits COX4I, COX5A, COX5B, COX6A, COX6B, COX6C, COX7A, COX7B, COX7C, COX8 and NDUFA4, which are encoded in the nuclear genome. The complex exists as a monomer or a dimer and forms supercomplexes (SCs) in the inner mitochondrial membrane with NADH-ubiquinone oxidoreductase (complex I, CI) and ubiquinol-cytochrome c oxidoreductase (cytochrome b-c1 complex, complex III, CIII), resulting in different assemblies (supercomplex SCI(1)III(2)IV(1) and megacomplex MCI(2)III(2)IV(2)).

The protein localises to the mitochondrion inner membrane. It carries out the reaction 4 Fe(II)-[cytochrome c] + O2 + 8 H(+)(in) = 4 Fe(III)-[cytochrome c] + 2 H2O + 4 H(+)(out). Its function is as follows. Component of the cytochrome c oxidase, the last enzyme in the mitochondrial electron transport chain which drives oxidative phosphorylation. The respiratory chain contains 3 multisubunit complexes succinate dehydrogenase (complex II, CII), ubiquinol-cytochrome c oxidoreductase (cytochrome b-c1 complex, complex III, CIII) and cytochrome c oxidase (complex IV, CIV), that cooperate to transfer electrons derived from NADH and succinate to molecular oxygen, creating an electrochemical gradient over the inner membrane that drives transmembrane transport and the ATP synthase. Cytochrome c oxidase is the component of the respiratory chain that catalyzes the reduction of oxygen to water. Electrons originating from reduced cytochrome c in the intermembrane space (IMS) are transferred via the dinuclear copper A center (CU(A)) of subunit 2 and heme A of subunit 1 to the active site in subunit 1, a binuclear center (BNC) formed by heme A3 and copper B (CU(B)). The BNC reduces molecular oxygen to 2 water molecules using 4 electrons from cytochrome c in the IMS and 4 protons from the mitochondrial matrix. This Gazella bennettii (Chinkara) protein is Cytochrome c oxidase subunit 3 (MT-CO3).